A 693-amino-acid polypeptide reads, in one-letter code: Guanyl-specific ribonuclease pgl-3 (693 aa).

The tract at residues 205-447 is involved in dimerization; the sequence is KKLMIEGPKI…VNRIIESLEK (243 aa). The active-site Proton acceptor is His437. 3 disordered regions span residues 445-468, 523-591, and 620-693; these read LEKS…GPTT, AEKN…DATP, and SSNG…RGGS. Residues 447 to 468 are compositionally biased toward low complexity; sequence KSSSSEPSATAKQTTTSNGPTT. Composition is skewed to polar residues over residues 528-548 and 569-580; these read NTPS…SPTK and ITKVSPQPQERT. The tract at residues 581–614 is required for interaction with sepa-1; sequence GTAWGSGDATPVPLATPVNEYKVSGFGAAPVASG. 3 stretches are compositionally biased toward gly residues: residues 625–634, 641–660, and 668–693; these read SGRGSYGGGR, RGAY…SRGY, and RGSY…RGGS. Positions 633–693 are RNA-binding RGG-box; it reads GRGGDRGGRG…GFFGGSRGGS (61 aa).

In terms of assembly, may form a homodimer. Interacts with pgl-1 and pgl-2; this association is not required for P-granule localization of either pgl-1 or pgl-2. Interacts with sepa-1; the interaction is enhanced in the presence of RNA. Interacts with prmt-1; the interaction is direct. Methylated at arginine residues in the RNA-binding RGG-box by prmt-1. Methylation promotes P-granule degradation by autophagy. As to expression, highly expressed in the germline. Expressed in most somatic cells.

Its subcellular location is the cytoplasmic granule. It catalyses the reaction [RNA] containing guanosine + H2O = an [RNA fragment]-3'-guanosine-3'-phosphate + a 5'-hydroxy-ribonucleotide-3'-[RNA fragment].. Its function is as follows. Guanyl-specific endoribonuclease which cleaves the phosphodiester bond in single-stranded RNA between the 3'-guanylic residue and the 5'-OH residue of adjacent nucleotide, resulting in the formation of a corresponding 2',3'-cyclic phosphate intermediate. P-granule component involved in germline development. Together with the P-granule component pgl-1, is involved in the formation of P-granules. Together with pgl-1, probably recruits other granule components such as pos-1, mex-3 and glh-1, and RNA to P-granules. In vitro, binds mRNA; this interaction is required for the formation of liquid-like droplets that resemble P-granules. Most likely recruits pgl-1 into P-granules during autophagy. Associates with adapters such as sepa-1 and is required for the accumulation and degradation of P-granules by autophagy in somatic cells. This ensures exclusive localization of the P-granules in germ cells. In addition, may act redundantly with pgl-1 to protect germ cells from excessive germline apoptosis during normal oogenesis and development of the two gonadal arms. This may in part be through regulating the localization of sir-2.1 which is involved in germ cell apoptosis. May protect somatic cells from excessive apoptosis during normal development. This is Guanyl-specific ribonuclease pgl-3 from Caenorhabditis elegans.